The following is a 315-amino-acid chain: Atrochrysone carboxyl ACP thioesterase (315 aa).

Zn(2+)-binding residues include His95, His97, Asp99, and His100. Catalysis depends on Asp99, which acts as the Proton donor/acceptor.

This sequence belongs to the metallo-beta-lactamase superfamily. Zn(2+) is required as a cofactor. In terms of tissue distribution, endocrocin is specifically produced in conidia.

The enzyme catalyses atrochrysone carboxyl-[ACP] + H2O = atrochrysone carboxylate + holo-[ACP] + H(+). Atrochrysone carboxyl ACP thioesterase; part of the gene cluster that mediates the biosynthesis of endocrocin, a simple anthraquinone interesting for many biotechnological applications. The pathway begins with the synthesis of atrochrysone thioester by the polyketide synthase (PKS) encA. The atrochrysone carboxyl ACP thioesterase encB then breaks the thioester bond and releases the atrochrysone carboxylic acid from encA. The atrochrysone carboxylic acid is then converted to endocrocin anthrone which is further oxidized into endocrocin by the anthrone oxygenase encC. The exact function of encD has not been identified yet, but it negatively regulates endocrocin production, likely through the modification of endocrocin itself. This chain is Atrochrysone carboxyl ACP thioesterase, found in Aspergillus fumigatus (strain ATCC MYA-4609 / CBS 101355 / FGSC A1100 / Af293) (Neosartorya fumigata).